The chain runs to 299 residues: 4-diphosphocytidyl-2-C-methyl-D-erythritol kinase (299 aa).

Lys16 is an active-site residue. 97–107 is an ATP binding site; it reads PVASGIGGGSA. The active site involves Asp140.

The protein belongs to the GHMP kinase family. IspE subfamily.

It carries out the reaction 4-CDP-2-C-methyl-D-erythritol + ATP = 4-CDP-2-C-methyl-D-erythritol 2-phosphate + ADP + H(+). The protein operates within isoprenoid biosynthesis; isopentenyl diphosphate biosynthesis via DXP pathway; isopentenyl diphosphate from 1-deoxy-D-xylulose 5-phosphate: step 3/6. Catalyzes the phosphorylation of the position 2 hydroxy group of 4-diphosphocytidyl-2C-methyl-D-erythritol. This is 4-diphosphocytidyl-2-C-methyl-D-erythritol kinase from Roseobacter denitrificans (strain ATCC 33942 / OCh 114) (Erythrobacter sp. (strain OCh 114)).